The following is a 901-amino-acid chain: Sperm-associated antigen 1 (901 aa).

TPR repeat units lie at residues 213–246 (ANREKGKGNEAFYSGDYEEAVMYYTRSLSALPTA), 247–279 (IAYNNRAQAEIKLQRWSSALEDCEKALELDPGN), and 280–313 (VKALLRRATTYKHQNKLQEAVDDLRKVLQVEPDN). The tract at residues 322 to 437 (EVERDLKNSE…DNPSGLKRRG (116 aa)) is disordered. S351 and S359 each carry phosphoserine. 5 TPR repeats span residues 430-464 (PSGLKRRGNELFRGGQFAEAAAQYSVAIAQLEPTG), 472-505 (SILYSNRAACYLKEGNCRDCIQDCNRALELHPFS), 507-539 (KPLLRRAMAYETLEQYRNAYVDYKTVLQIDCGI), 606-639 (FQALKEEGNQLVKDKNYKDAISKYNECLKINSKA), and 640-673 (CAIYTNRALCYLKLGQFEEAKLDCEQALQIDGEN). The disordered stretch occupies residues 694-776 (GVDPSQVLLS…AEPAEKLDVS (83 aa)). Phosphoserine is present on S703. A compositionally biased stretch (basic and acidic residues) spans 708 to 717 (EAARHLDTKN). S739 and S740 each carry phosphoserine. A GTP-binding site is contributed by 756-763 (PARDGVED). A Phosphoserine modification is found at S766.

Detected in cerebellum, tongue, esophagus, forestomach, sperm and testis.

It localises to the cytoplasm. The protein localises to the dynein axonemal particle. Functionally, may play a role in the cytoplasmic assembly of the ciliary dynein arms. May play a role in fertilization. Binds GTP and has GTPase activity. The chain is Sperm-associated antigen 1 (Spag1) from Mus musculus (Mouse).